Consider the following 193-residue polypeptide: Crossover junction endodeoxyribonuclease RuvC (193 aa).

Catalysis depends on residues Asp-7, Glu-68, and Asp-141. Mg(2+)-binding residues include Asp-7, Glu-68, and Asp-141. Residues 174 to 193 (RQWAQATQHATRRRGVRRGM) are disordered. The segment covering 183–193 (ATRRRGVRRGM) has biased composition (basic residues).

Belongs to the RuvC family. In terms of assembly, homodimer which binds Holliday junction (HJ) DNA. The HJ becomes 2-fold symmetrical on binding to RuvC with unstacked arms; it has a different conformation from HJ DNA in complex with RuvA. In the full resolvosome a probable DNA-RuvA(4)-RuvB(12)-RuvC(2) complex forms which resolves the HJ. The cofactor is Mg(2+).

Its subcellular location is the cytoplasm. The catalysed reaction is Endonucleolytic cleavage at a junction such as a reciprocal single-stranded crossover between two homologous DNA duplexes (Holliday junction).. In terms of biological role, the RuvA-RuvB-RuvC complex processes Holliday junction (HJ) DNA during genetic recombination and DNA repair. Endonuclease that resolves HJ intermediates. Cleaves cruciform DNA by making single-stranded nicks across the HJ at symmetrical positions within the homologous arms, yielding a 5'-phosphate and a 3'-hydroxyl group; requires a central core of homology in the junction. The consensus cleavage sequence is 5'-(A/T)TT(C/G)-3'. Cleavage occurs on the 3'-side of the TT dinucleotide at the point of strand exchange. HJ branch migration catalyzed by RuvA-RuvB allows RuvC to scan DNA until it finds its consensus sequence, where it cleaves and resolves the cruciform DNA. The chain is Crossover junction endodeoxyribonuclease RuvC from Bifidobacterium animalis subsp. lactis (strain AD011).